Reading from the N-terminus, the 382-residue chain is ATP phosphoribosyltransferase regulatory subunit (382 aa).

It belongs to the class-II aminoacyl-tRNA synthetase family. HisZ subfamily. As to quaternary structure, heteromultimer composed of HisG and HisZ subunits.

Its subcellular location is the cytoplasm. Its pathway is amino-acid biosynthesis; L-histidine biosynthesis; L-histidine from 5-phospho-alpha-D-ribose 1-diphosphate: step 1/9. Its function is as follows. Required for the first step of histidine biosynthesis. May allow the feedback regulation of ATP phosphoribosyltransferase activity by histidine. The chain is ATP phosphoribosyltransferase regulatory subunit from Acidovorax ebreus (strain TPSY) (Diaphorobacter sp. (strain TPSY)).